The following is a 208-amino-acid chain: uncharacterized protein (208 aa).

4Fe-4S ferredoxin-type domains are found at residues 59 to 88 (GVLVTQRARCTGCHRCEISCTNFNDGSVGT), 114 to 145 (GDLNYTADTCRQCKEPQCMNVCPIGAITWQQK), 147 to 176 (GCITVDHKRCIGCSACTTACPWMMATVNTE), and 174 to 203 (NTESKKSSKCVLCGECANACPTGALKIIEW). Positions 68, 71, 74, 78, 123, 126, 131, 135, 156, 159, 162, 166, 183, 186, 189, and 193 each coordinate [4Fe-4S] cluster.

This is an uncharacterized protein from Escherichia coli O157:H7.